A 129-amino-acid chain; its full sequence is S-adenosylmethionine decarboxylase proenzyme (129 aa).

Catalysis depends on serine 63, which acts as the Schiff-base intermediate with substrate; via pyruvic acid. Serine 63 is modified (pyruvic acid (Ser); by autocatalysis). The Proton acceptor; for processing activity role is filled by histidine 68. The active-site Proton donor; for catalytic activity is the cysteine 83.

This sequence belongs to the prokaryotic AdoMetDC family. Type 1 subfamily. Heterotetramer of two alpha and two beta chains arranged as a dimer of alpha/beta heterodimers. It depends on pyruvate as a cofactor. In terms of processing, is synthesized initially as an inactive proenzyme. Formation of the active enzyme involves a self-maturation process in which the active site pyruvoyl group is generated from an internal serine residue via an autocatalytic post-translational modification. Two non-identical subunits are generated from the proenzyme in this reaction, and the pyruvate is formed at the N-terminus of the alpha chain, which is derived from the carboxyl end of the proenzyme. The post-translation cleavage follows an unusual pathway, termed non-hydrolytic serinolysis, in which the side chain hydroxyl group of the serine supplies its oxygen atom to form the C-terminus of the beta chain, while the remainder of the serine residue undergoes an oxidative deamination to produce ammonia and the pyruvoyl group blocking the N-terminus of the alpha chain.

It carries out the reaction S-adenosyl-L-methionine + H(+) = S-adenosyl 3-(methylsulfanyl)propylamine + CO2. It participates in amine and polyamine biosynthesis; S-adenosylmethioninamine biosynthesis; S-adenosylmethioninamine from S-adenosyl-L-methionine: step 1/1. In terms of biological role, catalyzes the decarboxylation of S-adenosylmethionine to S-adenosylmethioninamine (dcAdoMet), the propylamine donor required for the synthesis of the polyamines spermine and spermidine from the diamine putrescine. This Shouchella clausii (strain KSM-K16) (Alkalihalobacillus clausii) protein is S-adenosylmethionine decarboxylase proenzyme.